Here is a 78-residue protein sequence, read N- to C-terminus: Small ribosomal subunit protein bS20 (78 aa).

It belongs to the bacterial ribosomal protein bS20 family.

Binds directly to 16S ribosomal RNA. The polypeptide is Small ribosomal subunit protein bS20 (Streptococcus pneumoniae serotype 19F (strain G54)).